A 592-amino-acid polypeptide reads, in one-letter code: Putative uric acid sigma-54-dependent transcriptional regulator UacR (592 aa).

The region spanning 158-229 is the PAS domain; that stretch reads ISKIFATMID…HMQHIVSWDD (72 aa). A Sigma-54 factor interaction domain is found at 272–502; sequence LVGECRVMRQ…LSNLMEYLVN (231 aa). ATP contacts are provided by residues 300–307 and 364–373; these read GESGTGKE and ANTGTLFLDE. A DNA-binding region (H-T-H motif) is located at residues 567 to 585; the sequence is KQVADELGIGIATLYRKIK.

In terms of biological role, essential for both formate-dependent and formate-independent uric acid degradation. May be directly involved in the transcription of uacF in response to hypoxanthine, xanthine, and uric acid. This is Putative uric acid sigma-54-dependent transcriptional regulator UacR from Escherichia coli (strain K12).